Consider the following 501-residue polypeptide: Cytochrome P450 71D6 (501 aa).

Residue Cys442 participates in heme binding.

The protein belongs to the cytochrome P450 family. Heme is required as a cofactor.

The sequence is that of Cytochrome P450 71D6 (CYP71D6) from Solanum chacoense (Chaco potato).